The primary structure comprises 473 residues: Bestrophin-4 (473 aa).

Residues 1-31 are Cytoplasmic-facing; that stretch reads MTVSYTLKVAEARFGGFSGLLLRWRGSIYKL. Ala-10 lines the Ca(2+) pocket. Residues 32–51 traverse the membrane as a helical segment; it reads LYKEFLLFGALYAVLSITYR. At 52–60 the chain is on the extracellular side; the sequence is LLLTQEQRY. The helical transmembrane segment at 61 to 82 threads the bilayer; it reads VYAQVARYCNRSADLIPLSFVL. At 83–237 the chain is on the cytoplasmic side; the sequence is GFYVTLVVNR…DWISIPLVYT (155 aa). A helical membrane pass occupies residues 238–255; it reads QVVTIAVYSFFALSLVGR. Residues 256–289 are Extracellular-facing; that stretch reads QFVEPEAGAAKPQKLLKPGQEPAPALGDPDMYVP. The chain crosses the membrane as a helical span at residues 290 to 303; that stretch reads LTTLLQFFFYAGWL. The Cytoplasmic segment spans residues 304-473; it reads KVAEQIINPF…AESGDEALEP (170 aa). Residues Gln-308, Asn-311, Asp-316, and Asp-319 each contribute to the Ca(2+) site. Disordered regions lie at residues 379–408 and 428–473; these read TFNL…PAAQ and RNFG…ALEP. Low complexity predominate over residues 396–407; it reads ASPGSGRPAPAA. The span at 445–461 shows a compositional bias: basic and acidic residues; that stretch reads FRAEEGGDPEAAARIEE. Residues 462–473 are compositionally biased toward acidic residues; the sequence is ESAESGDEALEP.

It belongs to the anion channel-forming bestrophin (TC 1.A.46) family. Calcium-sensitive chloride channel subfamily. As to expression, predominantly found in colon and the weakly in fetal brain, spinal cord, retina, lung, trachea, testis and placenta.

Its subcellular location is the cell membrane. It catalyses the reaction chloride(in) = chloride(out). The enzyme catalyses hydrogencarbonate(in) = hydrogencarbonate(out). In terms of biological role, ligand-gated anion channel that allows the movement of anions across cell membranes when activated by Calcium (Ca2+). Mediates the movement of hydrogencarbonate and chloride. In Homo sapiens (Human), this protein is Bestrophin-4.